Here is a 73-residue protein sequence, read N- to C-terminus: Salivary protein FS48 (73 aa).

An N-terminal signal peptide occupies residues 1-21; sequence MKFAFAIFVVLAILHTELISA.

It is found in the secreted. In terms of biological role, salivary protein that inhibits host voltage-gated potassium channels Kv1.1/KCNA1, Kv1.2/KCNA2 and Kv1.3/KCNA3 likely via a voltage-independent pore-blocking mechanism. Suppresses expression of the Kv1.3/KCNA3 channel in lipopolysaccharide (LPS)-stimulated mouse macrophages and human T-cells. Down-regulates secretion of nitric oxide (NO) and inflammatory cytokines, such as TNF-alpha/TNF, IL-1beta/IL1B and IL6, in LPS-stimulated mouse macrophages in a manner dependent on Kv1.3/KCNA3 channel blockage. Reduces activation of MAPK and NF-kappa-B signaling pathways in LPS-stimulated mouse macrophages. Modulates intracellular Ca(2+) signaling in human PMA/ionomycin-triggered T-cells. Interferes with the activation of the MAPK, NF-kappa-B and NFATc1 pathways in human PMA/ionomycin-triggered T-cells. Reduces proliferation of human PMA/ionomycin-triggered T-cells. Down-regulates secretion of cytokines, such as TNF-alpha/TNF and IL2, in human PMA/ionomycin-triggered T-cells. The protein is Salivary protein FS48 of Xenopsylla cheopis (Oriental rat flea).